A 786-amino-acid polypeptide reads, in one-letter code: von Willebrand factor A domain-containing protein 5A (786 aa).

The region spanning 1 to 131 (MVHFCGLLTL…KAAVTLKYVQ (131 aa)) is the VIT domain. Residues 281-462 (EFIFLMDRSG…KALRTLKRSL (182 aa)) enclose the VWFA domain.

As to expression, expressed at low level in many tissues. Not expressed in 80% of tumor cell lines tested.

May play a role in tumorigenesis as a tumor suppressor. Altered expression of this protein and disruption of the molecular pathway it is involved in, may contribute directly to or modify tumorigenesis. This is von Willebrand factor A domain-containing protein 5A (VWA5A) from Homo sapiens (Human).